A 213-amino-acid polypeptide reads, in one-letter code: Imidazole glycerol phosphate synthase subunit HisH (213 aa).

Positions 1–212 constitute a Glutamine amidotransferase type-1 domain; sequence MLAILDYKAG…HRYCTEAADA (212 aa). The active-site Nucleophile is Cys79. Residues His187 and Glu189 contribute to the active site.

As to quaternary structure, heterodimer of HisH and HisF.

It localises to the cytoplasm. It carries out the reaction 5-[(5-phospho-1-deoxy-D-ribulos-1-ylimino)methylamino]-1-(5-phospho-beta-D-ribosyl)imidazole-4-carboxamide + L-glutamine = D-erythro-1-(imidazol-4-yl)glycerol 3-phosphate + 5-amino-1-(5-phospho-beta-D-ribosyl)imidazole-4-carboxamide + L-glutamate + H(+). The catalysed reaction is L-glutamine + H2O = L-glutamate + NH4(+). It participates in amino-acid biosynthesis; L-histidine biosynthesis; L-histidine from 5-phospho-alpha-D-ribose 1-diphosphate: step 5/9. Functionally, IGPS catalyzes the conversion of PRFAR and glutamine to IGP, AICAR and glutamate. The HisH subunit catalyzes the hydrolysis of glutamine to glutamate and ammonia as part of the synthesis of IGP and AICAR. The resulting ammonia molecule is channeled to the active site of HisF. In Nitratidesulfovibrio vulgaris (strain DP4) (Desulfovibrio vulgaris), this protein is Imidazole glycerol phosphate synthase subunit HisH.